The following is an 82-amino-acid chain: Three-finger toxin MicTx3 (82 aa).

Residues 1–21 (MKTLLLTLVVVTIMCLDLGYT) form the signal peptide. Disulfide bonds link Cys-24/Cys-44, Cys-38/Cys-59, Cys-63/Cys-74, and Cys-75/Cys-80.

The protein belongs to the three-finger toxin family. Short-chain subfamily. As to expression, expressed by the venom gland.

The protein resides in the secreted. In terms of biological role, has been described to inhibit nicotinic acetylcholine receptor (nAChR) alpha-7/CHRNA7 subunits and to bind acetylcholine binding protein (AChBP) (Kd=29.5 nM). The polypeptide is Three-finger toxin MicTx3 (Micrurus corallinus (Brazilian coral snake)).